The primary structure comprises 578 residues: Zinc finger-containing ubiquitin peptidase 1 (578 aa).

A C2H2-type 1 zinc finger spans residues 2-24 (LSCDICGETVTSEPDMKAHLIVH). The C2H2-type 2; atypical zinc finger occupies 29 to 52 (IVCPFCKLSGVSYDEMCFHIETAH). 2 consecutive C2H2-type zinc fingers follow at residues 154 to 177 (PECP…KTTH) and 193 to 215 (YDCP…VDLH). Positions 226–248 (DRVQCSGDLQLAHQLQQEEDRKR) are MIU. Residues 249–274 (RSEESRQEIEEFQKLQRQYGLDNSGG) are zUBD/ZHA. Residue lysine 262 is modified to N6-acetyllysine. The active-site Nucleophile is cysteine 360. Residue histidine 491 is the Proton acceptor of the active site. The active site involves aspartate 512.

The protein belongs to the peptidase C78 family. ZUFSP subfamily. As to quaternary structure, interacts with RPA1 and RPA2.

The protein resides in the cytoplasm. Its subcellular location is the nucleus. The catalysed reaction is Thiol-dependent hydrolysis of ester, thioester, amide, peptide and isopeptide bonds formed by the C-terminal Gly of ubiquitin (a 76-residue protein attached to proteins as an intracellular targeting signal).. Its function is as follows. Deubiquitinase with endodeubiquitinase activity that specifically interacts with and cleaves 'Lys-63'-linked long polyubiquitin chains. Shows only weak activity against 'Lys-11' and 'Lys-48'-linked chains. Plays an important role in genome stability pathways, functioning to prevent spontaneous DNA damage and also promote cellular survival in response to exogenous DNA damage. Modulates the ubiquitination status of replication protein A (RPA) complex proteins in response to replication stress. This chain is Zinc finger-containing ubiquitin peptidase 1, found in Macaca fascicularis (Crab-eating macaque).